The sequence spans 256 residues: Thiazole synthase (256 aa).

Lysine 95 serves as the catalytic Schiff-base intermediate with DXP. 1-deoxy-D-xylulose 5-phosphate is bound by residues glycine 156, 182 to 183, and 204 to 205; these read AG and NT.

It belongs to the ThiG family. In terms of assembly, homotetramer. Forms heterodimers with either ThiH or ThiS.

It is found in the cytoplasm. It carries out the reaction [ThiS sulfur-carrier protein]-C-terminal-Gly-aminoethanethioate + 2-iminoacetate + 1-deoxy-D-xylulose 5-phosphate = [ThiS sulfur-carrier protein]-C-terminal Gly-Gly + 2-[(2R,5Z)-2-carboxy-4-methylthiazol-5(2H)-ylidene]ethyl phosphate + 2 H2O + H(+). The protein operates within cofactor biosynthesis; thiamine diphosphate biosynthesis. Functionally, catalyzes the rearrangement of 1-deoxy-D-xylulose 5-phosphate (DXP) to produce the thiazole phosphate moiety of thiamine. Sulfur is provided by the thiocarboxylate moiety of the carrier protein ThiS. In vitro, sulfur can be provided by H(2)S. The protein is Thiazole synthase of Salmonella schwarzengrund (strain CVM19633).